Here is a 558-residue protein sequence, read N- to C-terminus: Dihydroxy-acid dehydratase (558 aa).

Cysteine 48 is a binding site for [2Fe-2S] cluster. Residue aspartate 80 participates in Mg(2+) binding. Cysteine 121 is a [2Fe-2S] cluster binding site. Positions 122 and 123 each coordinate Mg(2+). Lysine 123 carries the post-translational modification N6-carboxylysine. Cysteine 193 is a binding site for [2Fe-2S] cluster. Glutamate 445 is a binding site for Mg(2+). The Proton acceptor role is filled by serine 471.

The protein belongs to the IlvD/Edd family. As to quaternary structure, homodimer. The cofactor is [2Fe-2S] cluster. Mg(2+) serves as cofactor.

It carries out the reaction (2R)-2,3-dihydroxy-3-methylbutanoate = 3-methyl-2-oxobutanoate + H2O. The catalysed reaction is (2R,3R)-2,3-dihydroxy-3-methylpentanoate = (S)-3-methyl-2-oxopentanoate + H2O. It participates in amino-acid biosynthesis; L-isoleucine biosynthesis; L-isoleucine from 2-oxobutanoate: step 3/4. It functions in the pathway amino-acid biosynthesis; L-valine biosynthesis; L-valine from pyruvate: step 3/4. Functionally, functions in the biosynthesis of branched-chain amino acids. Catalyzes the dehydration of (2R,3R)-2,3-dihydroxy-3-methylpentanoate (2,3-dihydroxy-3-methylvalerate) into 2-oxo-3-methylpentanoate (2-oxo-3-methylvalerate) and of (2R)-2,3-dihydroxy-3-methylbutanoate (2,3-dihydroxyisovalerate) into 2-oxo-3-methylbutanoate (2-oxoisovalerate), the penultimate precursor to L-isoleucine and L-valine, respectively. The chain is Dihydroxy-acid dehydratase from Prochlorococcus marinus (strain SARG / CCMP1375 / SS120).